A 117-amino-acid polypeptide reads, in one-letter code: Large ribosomal subunit protein uL18 (117 aa).

The protein belongs to the universal ribosomal protein uL18 family. Part of the 50S ribosomal subunit; part of the 5S rRNA/L5/L18/L25 subcomplex. Contacts the 5S and 23S rRNAs.

In terms of biological role, this is one of the proteins that bind and probably mediate the attachment of the 5S RNA into the large ribosomal subunit, where it forms part of the central protuberance. This is Large ribosomal subunit protein uL18 from Leuconostoc mesenteroides subsp. mesenteroides (strain ATCC 8293 / DSM 20343 / BCRC 11652 / CCM 1803 / JCM 6124 / NCDO 523 / NBRC 100496 / NCIMB 8023 / NCTC 12954 / NRRL B-1118 / 37Y).